Consider the following 38-residue polypeptide: Cytochrome b6-f complex subunit 5 (38 aa).

A helical transmembrane segment spans residues L5–A25.

This sequence belongs to the PetG family. In terms of assembly, the 4 large subunits of the cytochrome b6-f complex are cytochrome b6, subunit IV (17 kDa polypeptide, PetD), cytochrome f and the Rieske protein, while the 4 small subunits are PetG, PetL, PetM and PetN. The complex functions as a dimer.

It is found in the cellular thylakoid membrane. Component of the cytochrome b6-f complex, which mediates electron transfer between photosystem II (PSII) and photosystem I (PSI), cyclic electron flow around PSI, and state transitions. PetG is required for either the stability or assembly of the cytochrome b6-f complex. In Prochlorococcus marinus (strain MIT 9313), this protein is Cytochrome b6-f complex subunit 5.